The chain runs to 83 residues: Cytochrome b559 subunit alpha (83 aa).

Residues 21–35 (VIHSITIPSLFIAGW) form a helical membrane-spanning segment. Residue histidine 23 coordinates heme.

It belongs to the PsbE/PsbF family. In terms of assembly, heterodimer of an alpha subunit and a beta subunit. PSII is composed of 1 copy each of membrane proteins PsbA, PsbB, PsbC, PsbD, PsbE, PsbF, PsbH, PsbI, PsbJ, PsbK, PsbL, PsbM, PsbT, PsbX, PsbY, PsbZ, Psb30/Ycf12, at least 3 peripheral proteins of the oxygen-evolving complex and a large number of cofactors. It forms dimeric complexes. It depends on heme b as a cofactor.

The protein resides in the plastid. It is found in the chloroplast thylakoid membrane. This b-type cytochrome is tightly associated with the reaction center of photosystem II (PSII). PSII is a light-driven water:plastoquinone oxidoreductase that uses light energy to abstract electrons from H(2)O, generating O(2) and a proton gradient subsequently used for ATP formation. It consists of a core antenna complex that captures photons, and an electron transfer chain that converts photonic excitation into a charge separation. This Ginkgo biloba (Ginkgo) protein is Cytochrome b559 subunit alpha.